The primary structure comprises 543 residues: ATP synthase subunit alpha (543 aa).

174–181 (GDRQTGKT) contacts ATP. The segment at 521–543 (VEKKPDVDKAAPVDQEKIVAGEK) is disordered.

The protein belongs to the ATPase alpha/beta chains family. In terms of assembly, F-type ATPases have 2 components, CF(1) - the catalytic core - and CF(0) - the membrane proton channel. CF(1) has five subunits: alpha(3), beta(3), gamma(1), delta(1), epsilon(1). CF(0) has three main subunits: a(1), b(2) and c(9-12). The alpha and beta chains form an alternating ring which encloses part of the gamma chain. CF(1) is attached to CF(0) by a central stalk formed by the gamma and epsilon chains, while a peripheral stalk is formed by the delta and b chains.

It is found in the cell membrane. The enzyme catalyses ATP + H2O + 4 H(+)(in) = ADP + phosphate + 5 H(+)(out). Functionally, produces ATP from ADP in the presence of a proton gradient across the membrane. The alpha chain is a regulatory subunit. This chain is ATP synthase subunit alpha, found in Bifidobacterium longum (strain DJO10A).